Consider the following 524-residue polypeptide: Nucleobase-ascorbate transporter 2 (524 aa).

A run of 12 helical transmembrane segments spans residues 41 to 61 (YILALGTAVMIPSILVPMMGG), 69 to 89 (VVQTLLFLQGVNTLLQTLFGT), 91 to 111 (LPTVIGGSYAFMVPIISIIHD), 133 to 153 (GAIIVASSVQIILGFSQMWAI), 155 to 175 (SRFFSPIGMVPVIALTGFGLF), 179 to 199 (FPVVGNCVEIGLPMLILFVIF), 217 to 237 (FALIIALIIVWAYAHVLTASG), 282 to 302 (AFAMMAAVLVSLIESTGAFKA), 359 to 379 (RVIQISAGFMIFFSMLGKFGA), 380 to 400 (LFASIPFTIFAAVYCVLFGLV), 419 to 439 (LFIVGVSLFLGLSIPEYFRDF), and 457 to 477 (DFLNTIFLSSPMVALMVAVFL).

Belongs to the nucleobase:cation symporter-2 (NCS2) (TC 2.A.40) family. Expressed in cotyledons 10 days after imbibition (DAI). Expressed in the minor and major veins of cotyledons and leaves, in the shoot apex and pedicels. Expressed in the root meristems, root tips and lateral root primordia.

Its subcellular location is the membrane. The polypeptide is Nucleobase-ascorbate transporter 2 (NAT2) (Arabidopsis thaliana (Mouse-ear cress)).